Reading from the N-terminus, the 73-residue chain is Large ribosomal subunit protein uL24 (73 aa).

Positions 53-65 (NPKGGFIKKEKPM) are enriched in basic and acidic residues. The tract at residues 53-73 (NPKGGFIKKEKPMHISNVKKA) is disordered.

It belongs to the universal ribosomal protein uL24 family. In terms of assembly, part of the 50S ribosomal subunit.

In terms of biological role, one of two assembly initiator proteins, it binds directly to the 5'-end of the 23S rRNA, where it nucleates assembly of the 50S subunit. Its function is as follows. One of the proteins that surrounds the polypeptide exit tunnel on the outside of the subunit. In Helicobacter pylori (strain J99 / ATCC 700824) (Campylobacter pylori J99), this protein is Large ribosomal subunit protein uL24.